The chain runs to 219 residues: GTP-binding nuclear protein GSP1/CNR1 (219 aa).

The residue at position 2 (S2) is an N-acetylserine. S2 carries the post-translational modification Phosphoserine. The region spanning E9–N173 is the Small GTPase Ran-type domain. GTP is bound at residue D20 to T27. The tract at residues K39 to V47 is switch-I. GTP-binding positions include G70, N124 to D127, and S152 to K154. The segment at G70–Q86 is switch-II.

It belongs to the small GTPase superfamily. Ran family. In terms of assembly, found in a nuclear export complex with RanGTP, exportin and pre-miRNA. Forms a complex with YRB1. Interacts with BUD5, CEX1, RRP12, SRM1, and DIS3/RRP44.

It localises to the nucleus. GTP-binding protein involved in nucleocytoplasmic transport. Required for the import of protein into the nucleus and also for RNA export. Essential for cell viability. By analogy with Ras, Ran may be activated when GTP is exchanged for bound GDP by RCC1 and inactivated when GTP is hydrolyzed by Ran upon activation by RanGAP1. In Saccharomyces cerevisiae (strain ATCC 204508 / S288c) (Baker's yeast), this protein is GTP-binding nuclear protein GSP1/CNR1 (GSP1).